The following is a 128-amino-acid chain: Azurin (128 aa).

Residues 1–128 (AECKTTIDST…SMMKGTVTLK (128 aa)) enclose the Plastocyanin-like domain. A disulfide bridge links C3 with C26. The Cu cation site is built by H46, C112, H117, and M121.

Its subcellular location is the periplasm. In terms of biological role, transfers electrons from cytochrome c551 to cytochrome oxidase. In Pseudomonas fluorescens biotype B, this protein is Azurin.